We begin with the raw amino-acid sequence, 396 residues long: Tryptophan synthase beta chain (396 aa).

K88 is subject to N6-(pyridoxal phosphate)lysine.

It belongs to the TrpB family. Tetramer of two alpha and two beta chains. Pyridoxal 5'-phosphate is required as a cofactor.

The enzyme catalyses (1S,2R)-1-C-(indol-3-yl)glycerol 3-phosphate + L-serine = D-glyceraldehyde 3-phosphate + L-tryptophan + H2O. It participates in amino-acid biosynthesis; L-tryptophan biosynthesis; L-tryptophan from chorismate: step 5/5. Its function is as follows. The beta subunit is responsible for the synthesis of L-tryptophan from indole and L-serine. The chain is Tryptophan synthase beta chain from Shewanella baltica (strain OS155 / ATCC BAA-1091).